A 122-amino-acid polypeptide reads, in one-letter code: Ribonuclease P protein component (122 aa).

This sequence belongs to the RnpA family. Consists of a catalytic RNA component (M1 or rnpB) and a protein subunit.

It catalyses the reaction Endonucleolytic cleavage of RNA, removing 5'-extranucleotides from tRNA precursor.. In terms of biological role, RNaseP catalyzes the removal of the 5'-leader sequence from pre-tRNA to produce the mature 5'-terminus. It can also cleave other RNA substrates such as 4.5S RNA. The protein component plays an auxiliary but essential role in vivo by binding to the 5'-leader sequence and broadening the substrate specificity of the ribozyme. The protein is Ribonuclease P protein component of Roseiflexus castenholzii (strain DSM 13941 / HLO8).